Reading from the N-terminus, the 283-residue chain is MKNIRYIDKKDVENLIENKISDDVIIFLSGPTSQKTPLSVLRTKDIIAVNGSAQYLLSNNIVPFIYVLTDVRFLHQRRDDFYKFSQRSRYTIVNVDVYEHASKEDKLYILQNCLVLRSFYRREKGGFIKKIKFNILRQIHKELLISVPLSKKGRLVGFCKDISLGYCSCHTIAFAAIQIAYSLKYARIICSGLDLTGSCSRFYDENKNPMPSELSRDLFKILPFFRFMHDNVKDINIYNLSDDTAISYDVIPFIKLQDISAEESKDMTRKKMQYRTSTDSYAN.

It localises to the cytoplasm. The enzyme catalyses an alpha-Kdo-(2-&gt;4)-alpha-Kdo-(2-&gt;6)-lipid IVA + CMP-3-deoxy-beta-D-manno-octulosonate = an alpha-Kdo-(2-&gt;4)-alpha-Kdo-(2-&gt;4)-alpha-Kdo-(2-&gt;6)-lipid IVA + CMP + H(+). It catalyses the reaction alpha-Kdo-(2-&gt;4)-alpha-Kdo-(2-&gt;6)-lipid IVA (E. coli) + CMP-3-deoxy-beta-D-manno-octulosonate = alpha-Kdo-(2-&gt;4)-alpha-Kdo-(2-&gt;4)-alpha-Kdo-(2-&gt;6)-lipid IVA + CMP + H(+). It participates in bacterial outer membrane biogenesis; LPS core biosynthesis. It functions in the pathway bacterial outer membrane biogenesis; LOS core biosynthesis. Functionally, involved in the biosynthesis of the core oligosaccharide region of lipopolysaccharide (LPS). Required for the addition of 3-deoxy-D-manno-oct-2-ulosonic acid III (KdoIII) to the KdoII residue of the inner lipopolysaccharide core. May also play a role in a lipooligosaccharide (LOS) biosynthesis pathway. The sequence is that of Probable 3-deoxy-manno-octulosonic acid transferase from Escherichia coli (strain K12).